The sequence spans 554 residues: Probable ATP-binding cassette sub-family F member 3 homolog (554 aa).

2 ABC transporter domains span residues 89-285 (GDLH…ASAR) and 351-554 (IEFV…GLGV). Residues 122 to 129 (GRNGIGKT) and 383 to 390 (GANGQGKS) contribute to the ATP site.

The protein belongs to the ABC transporter superfamily. ABCF family. EF3 subfamily.

The sequence is that of Probable ATP-binding cassette sub-family F member 3 homolog from Encephalitozoon cuniculi (strain GB-M1) (Microsporidian parasite).